The chain runs to 161 residues: Putative allophycocyanin subunit alpha 2 (161 aa).

At asparagine 71 the chain carries N4-methylasparagine. Cysteine 81 lines the (2R,3E)-phycocyanobilin pocket.

The protein belongs to the phycobiliprotein family. In terms of assembly, heterohexamer of two alpha chains, one alpha-B chain and three beta chains. In terms of processing, contains one covalently linked phycocyanobilin chromophore. The chromophore is added by phycocyanobilin lyase CpcS 1.

The protein localises to the cellular thylakoid membrane. In terms of biological role, light-harvesting photosynthetic bile pigment-protein from the phycobiliprotein complex. Allophycocyanin has a maximum absorption at approximately 650 to 653 nanometers. This Nostoc sp. (strain PCC 7120 / SAG 25.82 / UTEX 2576) protein is Putative allophycocyanin subunit alpha 2 (apcA2).